We begin with the raw amino-acid sequence, 151 residues long: 3-hydroxyacyl-[acyl-carrier-protein] dehydratase FabZ (151 aa).

H49 is a catalytic residue.

It belongs to the thioester dehydratase family. FabZ subfamily.

The protein resides in the cytoplasm. It carries out the reaction a (3R)-hydroxyacyl-[ACP] = a (2E)-enoyl-[ACP] + H2O. Functionally, involved in unsaturated fatty acids biosynthesis. Catalyzes the dehydration of short chain beta-hydroxyacyl-ACPs and long chain saturated and unsaturated beta-hydroxyacyl-ACPs. The polypeptide is 3-hydroxyacyl-[acyl-carrier-protein] dehydratase FabZ (Bordetella parapertussis (strain 12822 / ATCC BAA-587 / NCTC 13253)).